Reading from the N-terminus, the 2224-residue chain is Myomegalin (2224 aa).

Coiled coils occupy residues 41-97 (REDV…RQQE), 162-205 (DQYS…LLEE), 236-318 (VSES…REML), and 350-682 (CSQL…ALRQ). Positions 206 to 236 (PASMEVQPVPKGLPTQQKPDLHETPTTQPPV) are disordered. Polar residues predominate over residues 219–236 (PTQQKPDLHETPTTQPPV). The segment at 703 to 751 (GVTSIGPHHGEQTDQGSMQMPSRDDSTSLTAREEASIPRSTLGDSDTVA) is disordered. T705 carries the post-translational modification Phosphothreonine. Residues 724-738 (SRDDSTSLTAREEAS) show a composition bias toward basic and acidic residues. Coiled-coil stretches lie at residues 745 to 822 (GDSD…QLVD), 856 to 886 (NKRQQLLLMLEGLVDERSRLNEALQAERQLY), and 949 to 986 (AQEMLHLRAEIHQHLEEKRKAEVELKELKAQIEEAGFS). 3 disordered regions span residues 1098 to 1128 (TGLPSLGKHQHQEQENTTTARPGSRPQSLPL), 1141 to 1161 (NKSQAQDSGHQPEFSLPGSTK), and 1270 to 1298 (VSPPAKKPLENKPGKQEEFRAHGTPDDSS). Polar residues predominate over residues 1112 to 1124 (ENTTTARPGSRPQ). 3 coiled-coil regions span residues 1159–1187 (STKHLRSQLAQCRQRYQDLQEKLLISEAT), 1295–1331 (DDSSLLRKDIRDLKAQLQNANKVIQNLRSRVRSLSAT), and 1377–1401 (GLQAKKDLESLIQRVSQLEAQLPKT). Positions 1276–1298 (KPLENKPGKQEEFRAHGTPDDSS) are enriched in basic and acidic residues. The Olduvai domain maps to 1497–1588 (KDHKSEKEEA…DEKKPSPSHS (92 aa)). 4 disordered regions span residues 1576 to 1637 (THYD…SLSQ), 1736 to 1757 (SSGQWDMMRPQKGSVSGELSSG), 1805 to 1824 (LSSTARENGSTSHFYSQGLE), and 1962 to 2001 (KASLGPIAVGQSFPDKAEPANLHQGSAASPPVRDVGLNSP). The span at 1599 to 1609 (ESSSSPISLPT) shows a compositional bias: polar residues. Low complexity predominate over residues 1748-1757 (GSVSGELSSG). Positions 1769–1958 (GADLLEEHLG…RLQLEQQMDR (190 aa)) form a coiled coil. Residues 2148–2191 (KEGQLMEKELLDLRAQVSQQEQILQNTAARLKRANQRKKSMEQF) adopt a coiled-coil conformation.

Interacts with PDE4D. Isoform 2 interacts with MAPRE1 and MAPRE3. Isoform 2 forms a pericentrosomal complex with AKAP9, CDK5RAP2 and EB1/MAPRE1; within this complex, may mediate MAPRE1-binding to CDK5RAP2. Interaction with AKAP9 stabilizes both proteins. Isoform 2 interacts (via N-terminus) with CAMSAP2; this interaction is much stronger in the presence of AKAP9. In complex with AKAP9, Isoform 2 recruits CAMSAP2 to the Golgi apparatus. Isoform 2 interacts with unglycosylated LGALS3BP; this interaction may connect the pericentrosomal complex to the gamma-tubulin ring complex (gamma-TuRC) to promote microtubule assembly and acetylation.

The protein localises to the cytoplasm. It is found in the cytoskeleton. Its subcellular location is the microtubule organizing center. The protein resides in the centrosome. It localises to the golgi apparatus. Functions as an anchor sequestering components of the cAMP-dependent pathway to Golgi and/or centrosomes. Functionally, participates in microtubule dynamics, promoting microtubule assembly. Depending upon the cell context, may act at the level of the Golgi apparatus or that of the centrosome. In complex with AKAP9, recruits CAMSAP2 to the Golgi apparatus and tethers non-centrosomal minus-end microtubules to the Golgi, an important step for polarized cell movement. In complex with AKAP9, EB1/MAPRE1 and CDK5RAP2, contributes to microtubules nucleation and extension from the centrosome to the cell periphery, a crucial process for directed cell migration, mitotic spindle orientation and cell-cycle progression. This chain is Myomegalin (Pde4dip), found in Mus musculus (Mouse).